Consider the following 754-residue polypeptide: uncharacterized protein (754 aa).

The interval 1-110 (MNKGQNQVVP…RNMLGSLQKT (110 aa)) is disordered. Residues 15-25 (FGGQNPPQLSS) are compositionally biased toward polar residues. Residues 26 to 35 (IPPIVNPVVV) show a composition bias toward low complexity. The segment covering 36–46 (QNRTSPGTPFI) has biased composition (polar residues). A compositionally biased stretch (basic and acidic residues) spans 49 to 60 (KAKEIYNRRQQE). Over residues 62 to 72 (ISSDSEEEESP) the composition is skewed to acidic residues. The span at 76–93 (AKSKYSRDSRDSRDTRDS) shows a compositional bias: basic and acidic residues.

It localises to the virion. This is an uncharacterized protein from Acanthamoeba polyphaga mimivirus (APMV).